A 233-amino-acid polypeptide reads, in one-letter code: Probable 2-phosphosulfolactate phosphatase (233 aa).

This sequence belongs to the ComB family. Mg(2+) is required as a cofactor.

It carries out the reaction (2R)-O-phospho-3-sulfolactate + H2O = (2R)-3-sulfolactate + phosphate. This chain is Probable 2-phosphosulfolactate phosphatase, found in Symbiobacterium thermophilum (strain DSM 24528 / JCM 14929 / IAM 14863 / T).